Reading from the N-terminus, the 628-residue chain is Putative serine esterase Mb1866c (628 aa).

Catalysis depends on S156, which acts as the Acyl-ester intermediate. Catalysis depends on charge relay system residues D322 and H350.

It belongs to the CocE/NonD hydrolase family.

This chain is Putative serine esterase Mb1866c, found in Mycobacterium bovis (strain ATCC BAA-935 / AF2122/97).